A 190-amino-acid chain; its full sequence is Protein LZIC (190 aa).

Positions 2 to 63 form a coiled coil; that stretch reads ASRGKTETSK…SEFNDSLKKI (62 aa).

It belongs to the CTNNBIP1 family. In terms of assembly, does not interact with CTNNB1. Ubiquitously expressed, with highest levels in kidney. Up-regulated in several cases of gastric cancers.

The chain is Protein LZIC (LZIC) from Homo sapiens (Human).